The primary structure comprises 180 residues: ATP-dependent protease subunit HslV (180 aa).

Thr7 is an active-site residue. Gly165, Cys168, and Thr171 together coordinate Na(+).

Belongs to the peptidase T1B family. HslV subfamily. As to quaternary structure, a double ring-shaped homohexamer of HslV is capped on each side by a ring-shaped HslU homohexamer. The assembly of the HslU/HslV complex is dependent on binding of ATP.

It is found in the cytoplasm. The catalysed reaction is ATP-dependent cleavage of peptide bonds with broad specificity.. Allosterically activated by HslU binding. Its function is as follows. Protease subunit of a proteasome-like degradation complex believed to be a general protein degrading machinery. This is ATP-dependent protease subunit HslV from Bacillus anthracis (strain A0248).